Here is a 174-residue protein sequence, read N- to C-terminus: Large ribosomal subunit protein bL12cy (174 aa).

Residues 1–45 constitute a chloroplast transit peptide; sequence MASTTFSSAFSILSLPSSSPSPPPWAPRTLPVANRRRRAAAVAST.

This sequence belongs to the bacterial ribosomal protein bL12 family.

Its subcellular location is the plastid. It is found in the chloroplast. The chain is Large ribosomal subunit protein bL12cy (RPL12-2) from Secale cereale (Rye).